A 561-amino-acid chain; its full sequence is Putative cysteine ligase BshC (561 aa).

Residues 472 to 517 (LAQSVEKVMQSTLNQVENLKSKTIKAEKQRHNDLIAQIEKSRDNLL) adopt a coiled-coil conformation.

Belongs to the BshC family.

This Chloroherpeton thalassium (strain ATCC 35110 / GB-78) protein is Putative cysteine ligase BshC.